The chain runs to 437 residues: Enolase 1 (437 aa).

K60 participates in a covalent cross-link: Glycyl lysine isopeptide (Lys-Gly) (interchain with G-Cter in ubiquitin). Residues S119 and S138 each carry the phosphoserine modification. Substrate contacts are provided by H160 and E169. A Phosphoserine modification is found at S188. E212 (proton donor) is an active-site residue. K243 is covalently cross-linked (Glycyl lysine isopeptide (Lys-Gly) (interchain with G-Cter in ubiquitin)). The Mg(2+) site is built by D247 and E296. E296 contributes to the substrate binding site. A Phosphothreonine modification is found at T313. Substrate is bound at residue D321. D321 is a binding site for Mg(2+). T324 carries the post-translational modification Phosphothreonine. The active-site Proton acceptor is the K346. Residue K358 forms a Glycyl lysine isopeptide (Lys-Gly) (interchain with G-Cter in ubiquitin) linkage. Substrate contacts are provided by residues 373–376 (SHRS) and K397.

The protein belongs to the enolase family. As to quaternary structure, homodimer. Mg(2+) serves as cofactor.

Its subcellular location is the cytoplasm. It catalyses the reaction (2R)-2-phosphoglycerate = phosphoenolpyruvate + H2O. It functions in the pathway carbohydrate degradation; glycolysis; pyruvate from D-glyceraldehyde 3-phosphate: step 4/5. This is Enolase 1 (ENO1) from Saccharomyces cerevisiae (strain ATCC 204508 / S288c) (Baker's yeast).